We begin with the raw amino-acid sequence, 153 residues long: Neuromedin-S (153 aa).

An N-terminal signal peptide occupies residues 1-26 (MKHLRPQFPLILAIYCFCMLQIPSSG). Propeptides lie at residues 27–69 (FPQP…IYKR), 70–105 (FLFH…ANRR), and 106–108 (MKR). Residue Asn-141 is modified to Asparagine amide. Positions 144-153 (NIEDEAQIQW) are excised as a propeptide.

The protein belongs to the NmU family.

It is found in the secreted. Its function is as follows. Implicated in the regulation of circadian rhythms through autocrine and/or paracrine actions. The chain is Neuromedin-S (NMS) from Homo sapiens (Human).